A 938-amino-acid polypeptide reads, in one-letter code: Ankyrin repeat and LEM domain-containing protein 2 (938 aa).

The Lumenal segment spans residues 1–12; sequence MLWPRLAAAEWA. Residues 13–32 traverse the membrane as a helical; Signal-anchor for type III membrane protein segment; the sequence is ALAWELLGASVLLIAVRWLV. Topologically, residues 33–938 are cytoplasmic; sequence RRLGPRPGGL…MARLAELAAL (906 aa). Residues 69–113 enclose the LEM domain; the sequence is LARLKLLNPDDLREEIVKAGLKCGPITSTTRFIFEKKLAQALLEQ. A phosphoserine mark is found at Ser-259 and Ser-268. The stretch at 411–440 is one ANK repeat; the sequence is GYDTPLHFACKFGNADVVNVLSSHHLIVKN. A phosphoserine mark is found at Ser-488, Ser-496, Ser-512, and Ser-528. Over residues 609–627 the composition is skewed to basic and acidic residues; it reads GKKAQQETGEREASCRDKA. Positions 609–636 are disordered; it reads GKKAQQETGEREASCRDKATTSGSNSIS. Phosphoserine occurs at positions 662, 804, 896, and 914. Residues 870–924 are disordered; that stretch reads RQSWPSPAVKGRFKSQLPDLSGPHSYSPGRNSVAGSNPAKPGLGSPGRYSPVHGS.

The protein belongs to the ANKLE2 family. As to quaternary structure, interacts with BAF/BANF1. Interacts with protein phosphatase 2A (PP2A) components PPP2C (PPP2CA or PPP2CB) and PPP2R1A. (Microbial infection) May interact with non-structural protein 4A/NS4A from Zika virus strains Mr-766 or French Polynesia 10087PF/2013; the interaction may inhibit ANKLE2 function and contribute to defects in brain development, such as microcephaly.

The protein localises to the endoplasmic reticulum membrane. In terms of biological role, involved in mitotic nuclear envelope reassembly by promoting dephosphorylation of BAF/BANF1 during mitotic exit. Coordinates the control of BAF/BANF1 dephosphorylation by inhibiting VRK1 kinase and promoting dephosphorylation of BAF/BANF1 by protein phosphatase 2A (PP2A), thereby facilitating nuclear envelope assembly. May regulate nuclear localization of VRK1 in non-dividing cells. It is unclear whether it acts as a real PP2A regulatory subunit or whether it is involved in recruitment of the PP2A complex. Involved in brain development. In Homo sapiens (Human), this protein is Ankyrin repeat and LEM domain-containing protein 2 (ANKLE2).